Here is a 270-residue protein sequence, read N- to C-terminus: Putative ABC transporter ATP-binding protein MG304 (270 aa).

Residues 1–232 form the ABC transporter domain; that stretch reads MLQVKNLSFK…LDLFHNHHFN (232 aa). 36–43 serves as a coordination point for ATP; that stretch reads GHNGSGKS.

It belongs to the ABC transporter superfamily.

The chain is Putative ABC transporter ATP-binding protein MG304 from Mycoplasma genitalium (strain ATCC 33530 / DSM 19775 / NCTC 10195 / G37) (Mycoplasmoides genitalium).